The chain runs to 256 residues: Thiazole synthase (256 aa).

Residue K96 is the Schiff-base intermediate with DXP of the active site. Residues G157, 184-185 (AG), and 206-207 (NT) contribute to the 1-deoxy-D-xylulose 5-phosphate site.

The protein belongs to the ThiG family. Homotetramer. Forms heterodimers with either ThiH or ThiS.

It localises to the cytoplasm. The catalysed reaction is [ThiS sulfur-carrier protein]-C-terminal-Gly-aminoethanethioate + 2-iminoacetate + 1-deoxy-D-xylulose 5-phosphate = [ThiS sulfur-carrier protein]-C-terminal Gly-Gly + 2-[(2R,5Z)-2-carboxy-4-methylthiazol-5(2H)-ylidene]ethyl phosphate + 2 H2O + H(+). The protein operates within cofactor biosynthesis; thiamine diphosphate biosynthesis. Functionally, catalyzes the rearrangement of 1-deoxy-D-xylulose 5-phosphate (DXP) to produce the thiazole phosphate moiety of thiamine. Sulfur is provided by the thiocarboxylate moiety of the carrier protein ThiS. In vitro, sulfur can be provided by H(2)S. This chain is Thiazole synthase, found in Brucella melitensis biotype 2 (strain ATCC 23457).